We begin with the raw amino-acid sequence, 255 residues long: Acetylglutamate kinase (255 aa).

Substrate-binding positions include 40-41, Arg-62, and Asn-153; that span reads GG.

The protein belongs to the acetylglutamate kinase family. ArgB subfamily.

The protein resides in the cytoplasm. It carries out the reaction N-acetyl-L-glutamate + ATP = N-acetyl-L-glutamyl 5-phosphate + ADP. Its pathway is amino-acid biosynthesis; L-arginine biosynthesis; N(2)-acetyl-L-ornithine from L-glutamate: step 2/4. Functionally, catalyzes the ATP-dependent phosphorylation of N-acetyl-L-glutamate. The chain is Acetylglutamate kinase from Bacillus cereus (strain AH187).